Here is a 401-residue protein sequence, read N- to C-terminus: Lsg locus putative protein 1 (401 aa).

A run of 11 helical transmembrane segments spans residues valine 8–leucine 28, glycine 36–leucine 56, isoleucine 87–alanine 107, serine 132–leucine 152, lysine 162–tyrosine 182, alanine 199–leucine 219, leucine 237–leucine 257, tryptophan 282–glutamate 302, phenylalanine 320–leucine 340, cysteine 352–isoleucine 372, and tyrosine 374–threonine 394.

This sequence belongs to the polysaccharide synthase family. HI_0867/HI_1700 subfamily.

Its subcellular location is the cell membrane. In Haemophilus influenzae (strain ATCC 51907 / DSM 11121 / KW20 / Rd), this protein is Lsg locus putative protein 1.